Reading from the N-terminus, the 384-residue chain is PqqA peptide cyclase (384 aa).

Residues 14 to 230 (IPAPVGLLAE…EAARERLKGQ (217 aa)) form the Radical SAM core domain. The [4Fe-4S] cluster site is built by cysteine 28, cysteine 32, and cysteine 35.

This sequence belongs to the radical SAM superfamily. PqqE family. In terms of assembly, interacts with PqqD. The interaction is necessary for activity of PqqE. [4Fe-4S] cluster serves as cofactor.

The catalysed reaction is [PQQ precursor protein] + S-adenosyl-L-methionine = E-Y cross-linked-[PQQ precursor protein] + 5'-deoxyadenosine + L-methionine + H(+). Its pathway is cofactor biosynthesis; pyrroloquinoline quinone biosynthesis. Functionally, catalyzes the cross-linking of a glutamate residue and a tyrosine residue in the PqqA protein as part of the biosynthesis of pyrroloquinoline quinone (PQQ). This Methylorubrum extorquens (strain CM4 / NCIMB 13688) (Methylobacterium extorquens) protein is PqqA peptide cyclase.